The following is a 202-amino-acid chain: Putative 5'(3')-deoxyribonucleotidase (202 aa).

The active-site Nucleophile is aspartate 22. Mg(2+) contacts are provided by aspartate 22, aspartate 24, and aspartate 156. Catalysis depends on aspartate 24, which acts as the Proton donor.

Belongs to the 5'(3')-deoxyribonucleotidase family. Mg(2+) is required as a cofactor.

In terms of biological role, dephosphorylates the 5' and 2'(3')-phosphates of deoxyribonucleotides. The sequence is that of Putative 5'(3')-deoxyribonucleotidase from Chlorobaculum tepidum (strain ATCC 49652 / DSM 12025 / NBRC 103806 / TLS) (Chlorobium tepidum).